Here is a 197-residue protein sequence, read N- to C-terminus: MSLSIDVTSLPSISSSIFKNESSSATSTLSGKSIGRSEQYISPDVEAFNKYMLSKSPEDIGPSDSASNDPLTSFSIRSNAVKTNADAGVSMDSSTQSRPSSNVGCDQLDFSLNKGINVSANLDSCISISTDHKKEKSKKDKSRKHYPRIEADSDSEDYVLDDSDSDDGKCKNCKYKKKYFALRMRMKQVAMQLIEDL.

Positions 17-33 (IFKNESSSATSTLSGKS) are enriched in low complexity. The interval 17 to 36 (IFKNESSSATSTLSGKSIGR) is disordered. Phosphoserine; by host CK1 is present on Ser-67. Asp-92 is a Mg(2+) binding site. The segment at 131 to 166 (DHKKEKSKKDKSRKHYPRIEADSDSEDYVLDDSDSD) is disordered. Over residues 152–165 (DSDSEDYVLDDSDS) the composition is skewed to acidic residues. Residues Ser-153, Ser-155, Ser-163, and Ser-165 each carry the phosphoserine; by host modification.

This sequence belongs to the rotavirus NSP5 family. As to quaternary structure, homodimer. Interacts with VP1. Interacts with VP2. Interacts with NSP2; this interaction leads to up-regulation of NSP5 hyperphosphorylation and formation of virus factories. Interacts with NSP6. Participates in the selective exclusion of host proteins from stress granules (SG) and P bodies (PB). Also participates in the sequestration of these remodeled organelles in viral factories. Mg(2+) is required as a cofactor. Post-translationally, O-glycosylated. Hyperphosphorylated on serine residues, when in dimeric form. Phosphorylation by host CK1 is required for the hyperphosphorylation of NSP5 dimer.

It is found in the host cytoplasm. Its function is as follows. Plays an essential role in the viral genome replication. Participates, together with NSP2, in the formation of viral factories (viroplasms), which are large inclusions in the host cytoplasm where replication intermediates are assembled and viral RNA replication takes place. Orchestrates the recruitment of viroplasmic proteins such as capsid proteins to these factories. Participates in the selective exclusion of host proteins from stress granules (SG) and P bodies (PB). Also participates in the sequestration of these remodeled organelles in viral factories. This is Non-structural protein 5 from Homo sapiens (Human).